The primary structure comprises 441 residues: POC1 centriolar protein homolog A (441 aa).

WD repeat units lie at residues 16–55, 58–97, 100–139, 142–181, 184–223, 226–265, and 268–307; these read GHRD…RAYR, GHKD…ESTA, AHTG…FLFS, QHIN…CIQS, EHGG…LIQH, VHSG…LLYT, and GHQG…GSYP. The segment at 347-376 is disordered; that stretch reads DLEPHITEMSVKDRSSPLSYTSRSVDQHHP. Basic and acidic residues predominate over residues 348 to 361; the sequence is LEPHITEMSVKDRS. Residues 400–427 adopt a coiled-coil conformation; it reads LTRTVGILEQRLSLTEDKLKECIEQQQA.

The protein belongs to the WD repeat POC1 family. Interacts with pat.

The protein resides in the cytoplasm. It is found in the cytoskeleton. In terms of biological role, may play an important role in centriole assembly and/or stability and ciliogenesis. In Xenopus laevis (African clawed frog), this protein is POC1 centriolar protein homolog A (poc1a).